We begin with the raw amino-acid sequence, 885 residues long: Eukaryotic translation initiation factor 3 subunit C (885 aa).

A disordered region spans residues 1–81 (MSFFAKLQGS…SDSDDERQAV (81 aa)). Residues 9 to 28 (GSDSESSSGSESEESILSGS) are compositionally biased toward low complexity. Residues 55 to 76 (EESESEEESSDEDEEEMSDSDD) show a composition bias toward acidic residues. In terms of domain architecture, PCI spans 624 to 797 (FHMHLNVELL…GVVIFHRVEQ (174 aa)). Positions 822–885 (LDVKLGNQGQ…TTMGRRVTAQ (64 aa)) are disordered. The segment covering 855–872 (RGTYRGRGGRGGRGGFNQ) has biased composition (gly residues).

This sequence belongs to the eIF-3 subunit C family. Component of the eukaryotic translation initiation factor 3 (eIF-3) complex.

The protein localises to the cytoplasm. In terms of biological role, component of the eukaryotic translation initiation factor 3 (eIF-3) complex, which is involved in protein synthesis of a specialized repertoire of mRNAs and, together with other initiation factors, stimulates binding of mRNA and methionyl-tRNAi to the 40S ribosome. The eIF-3 complex specifically targets and initiates translation of a subset of mRNAs involved in cell proliferation. The polypeptide is Eukaryotic translation initiation factor 3 subunit C (Cryptococcus neoformans var. neoformans serotype D (strain B-3501A) (Filobasidiella neoformans)).